The following is a 104-amino-acid chain: Large ribosomal subunit protein uL24 (104 aa).

This sequence belongs to the universal ribosomal protein uL24 family. In terms of assembly, part of the 50S ribosomal subunit.

One of two assembly initiator proteins, it binds directly to the 5'-end of the 23S rRNA, where it nucleates assembly of the 50S subunit. Its function is as follows. One of the proteins that surrounds the polypeptide exit tunnel on the outside of the subunit. The protein is Large ribosomal subunit protein uL24 of Pseudomonas fluorescens (strain Pf0-1).